Here is a 322-residue protein sequence, read N- to C-terminus: Fructose-1,6-bisphosphatase class 1 1 (322 aa).

4 residues coordinate Mg(2+): glutamate 84, aspartate 103, leucine 105, and aspartate 106. Substrate is bound by residues 106–109 (DGSS), asparagine 198, and lysine 264. Glutamate 270 serves as a coordination point for Mg(2+).

Belongs to the FBPase class 1 family. As to quaternary structure, homotetramer. The cofactor is Mg(2+).

It localises to the cytoplasm. It carries out the reaction beta-D-fructose 1,6-bisphosphate + H2O = beta-D-fructose 6-phosphate + phosphate. It participates in carbohydrate biosynthesis; gluconeogenesis. This is Fructose-1,6-bisphosphatase class 1 1 from Pseudoalteromonas translucida (strain TAC 125).